The chain runs to 202 residues: RPKLPHRHPEIIQNEQDSREKVLKERKFPSFALHTPREEYINELNRQRELLKEKQKDEHKEYLIEDPEQQESSSTSSSEEVVPINTEQKRIPREDMLYQHTLEQLRRLSKYNQLQLQAIYAQEQLIRMKENSQRKPMRVVNQEQAYFYLEPFQPSYQLDVYPYAAWFHPAQIMQHVAYSPFHDTAKLIASENSEKTDIIPEW.

Disordered stretches follow at residues 1-25 (RPKL…VLKE) and 51-84 (LKEK…VVPI). 2 stretches are compositionally biased toward basic and acidic residues: residues 16 to 25 (QDSREKVLKE) and 51 to 63 (LKEK…KEYL). The residue at position 18 (Ser18) is a Phosphoserine. Over residues 70-80 (QESSSTSSSEE) the composition is skewed to low complexity. Phosphoserine is present on residues Ser72, Ser73, Ser74, Ser76, Ser77, and Ser78.

This sequence belongs to the alpha-casein family. In terms of tissue distribution, mammary gland specific. Secreted in milk.

The protein localises to the secreted. Its function is as follows. Important role in the capacity of milk to transport calcium phosphate. The polypeptide is Alpha-S1-casein (Equus asinus (Donkey)).